Consider the following 430-residue polypeptide: UPF0597 protein DSY1109 (430 aa).

The protein belongs to the UPF0597 family.

This Desulfitobacterium hafniense (strain Y51) protein is UPF0597 protein DSY1109.